We begin with the raw amino-acid sequence, 320 residues long: Biotin synthase (320 aa).

The Radical SAM core domain maps to 43-270 (GAVQKSQLLS…KSWVRLSAGR (228 aa)). Residues Cys58, Cys62, and Cys65 each contribute to the [4Fe-4S] cluster site. 4 residues coordinate [2Fe-2S] cluster: Cys102, Cys133, Cys193, and Arg265.

This sequence belongs to the radical SAM superfamily. Biotin synthase family. Homodimer. Requires [4Fe-4S] cluster as cofactor. [2Fe-2S] cluster is required as a cofactor.

The catalysed reaction is (4R,5S)-dethiobiotin + (sulfur carrier)-SH + 2 reduced [2Fe-2S]-[ferredoxin] + 2 S-adenosyl-L-methionine = (sulfur carrier)-H + biotin + 2 5'-deoxyadenosine + 2 L-methionine + 2 oxidized [2Fe-2S]-[ferredoxin]. It participates in cofactor biosynthesis; biotin biosynthesis; biotin from 7,8-diaminononanoate: step 2/2. In terms of biological role, catalyzes the conversion of dethiobiotin (DTB) to biotin by the insertion of a sulfur atom into dethiobiotin via a radical-based mechanism. The sequence is that of Biotin synthase from Hyphomonas neptunium (strain ATCC 15444).